A 237-amino-acid chain; its full sequence is Pyridoxal 5'-phosphate synthase subunit PdxS (237 aa).

The Schiff-base intermediate with D-ribose 5-phosphate role is filled by Lys-19. Gly-91 is a D-ribose 5-phosphate binding site. Arg-103 lines the D-glyceraldehyde 3-phosphate pocket. D-ribose 5-phosphate-binding positions include Gly-157 and 178 to 179; that span reads GS.

This sequence belongs to the PdxS/SNZ family. In the presence of PdxT, forms a dodecamer of heterodimers.

It catalyses the reaction aldehydo-D-ribose 5-phosphate + D-glyceraldehyde 3-phosphate + L-glutamine = pyridoxal 5'-phosphate + L-glutamate + phosphate + 3 H2O + H(+). It functions in the pathway cofactor biosynthesis; pyridoxal 5'-phosphate biosynthesis. Its function is as follows. Catalyzes the formation of pyridoxal 5'-phosphate from ribose 5-phosphate (RBP), glyceraldehyde 3-phosphate (G3P) and ammonia. The ammonia is provided by the PdxT subunit. Can also use ribulose 5-phosphate and dihydroxyacetone phosphate as substrates, resulting from enzyme-catalyzed isomerization of RBP and G3P, respectively. This Methanococcus vannielii protein is Pyridoxal 5'-phosphate synthase subunit PdxS.